Reading from the N-terminus, the 203-residue chain is Outer-membrane lipoprotein carrier protein (203 aa).

The first 20 residues, 1–20 (MRRGRVWLAALCLAAGAAHA), serve as a signal peptide directing secretion.

Belongs to the LolA family. Monomer.

The protein localises to the periplasm. In terms of biological role, participates in the translocation of lipoproteins from the inner membrane to the outer membrane. Only forms a complex with a lipoprotein if the residue after the N-terminal Cys is not an aspartate (The Asp acts as a targeting signal to indicate that the lipoprotein should stay in the inner membrane). This chain is Outer-membrane lipoprotein carrier protein, found in Methylibium petroleiphilum (strain ATCC BAA-1232 / LMG 22953 / PM1).